The chain runs to 681 residues: Leucine-rich repeat, immunoglobulin-like domain and transmembrane domain-containing protein 3 (681 aa).

Positions 1–19 are cleaved as a signal peptide; it reads MWLSACLCLVLSFLGGVNG. A glycan (N-linked (GlcNAc...) asparagine) is linked at asparagine 18. The Lumenal portion of the chain corresponds to 20–584; that stretch reads TCPSQCSCEY…RVEGRGSQWS (565 aa). 5 LRR repeats span residues 56-79, 80-103, 104-128, 129-151, and 152-175; these read PVDT…AFYY, LVEL…SFYN, LRQL…LLDM, PHLR…AVRY, and LRNL…FLDS. Residues 254-344 form the Ig-like domain; the sequence is PSVMMSATKI…GISEAVVTVT (91 aa). An intrachain disulfide couples cysteine 275 to cysteine 328. N-linked (GlcNAc...) asparagine glycosylation occurs at asparagine 296. Disordered stretches follow at residues 350–391 and 425–464; these read TTTL…GLTS and TSVQ…KFPP. The span at 378-391 shows a compositional bias: polar residues; the sequence is TPPSKSWLSPGLTS. N-linked (GlcNAc...) asparagine glycans are attached at residues asparagine 485 and asparagine 506. A helical membrane pass occupies residues 585 to 605; that stretch reads LLLVVTSTACVIVVPLICFLL. Topologically, residues 606-681 are cytoplasmic; sequence YKVCKLQCTS…SDGCRTEYYG (76 aa).

In terms of tissue distribution, detected in the outer plexiform layer (OPL) of the retina, where it localizes to rod and cone ON-bipolar cells (at protein level). Also detected in bipolar cell bodies in the inner retinal layer (INL) (at protein level).

The protein localises to the cell projection. It is found in the dendrite. Its subcellular location is the perikaryon. The protein resides in the endoplasmic reticulum membrane. Its function is as follows. Plays a role in the synapse formation and synaptic transmission between cone photoreceptor cells and retinal bipolar cells. Required for normal transmission of a light-evoked stimulus from the cone photoreceptor cells to the ON-bipolar cells and ON-ganglion cells in the inner retina. Required in retinal ON-bipolar cells for normal localization of the cation channel TRPM1 at dendrite tips. Seems to play a specific role in synaptic contacts made by ON-bipolar cells with cone photoreceptor pedicles. May also have a role in cone synapse formation. Might facilitate FGFR1 exit from the endoplasmic reticulum to the Golgi. Could be a regulator of the FGFRs. The chain is Leucine-rich repeat, immunoglobulin-like domain and transmembrane domain-containing protein 3 from Mus musculus (Mouse).